Consider the following 118-residue polypeptide: Ribonuclease P protein component (118 aa).

It belongs to the RnpA family. In terms of assembly, consists of a catalytic RNA component (M1 or rnpB) and a protein subunit.

The catalysed reaction is Endonucleolytic cleavage of RNA, removing 5'-extranucleotides from tRNA precursor.. In terms of biological role, RNaseP catalyzes the removal of the 5'-leader sequence from pre-tRNA to produce the mature 5'-terminus. It can also cleave other RNA substrates such as 4.5S RNA. The protein component plays an auxiliary but essential role in vivo by binding to the 5'-leader sequence and broadening the substrate specificity of the ribozyme. This chain is Ribonuclease P protein component, found in Photobacterium profundum (strain SS9).